The following is a 743-amino-acid chain: Pentatricopeptide repeat-containing protein At2g16880 (743 aa).

PPR repeat units lie at residues 130-164 (SKALFDIALSAYLHEGKPHVALQIFQKMIRLKLKP), 165-202 (NLLTCNTLLIGLVRYPSSFSISSAREVFDDMVKIGVSL), 203-233 (NVQTFNVLVNGYCLEGKLEDALGMLERMVSE), 239-273 (DNVTYNTILKAMSKKGRLSDLKELLLDMKKNGLVP), 274-308 (NRVTYNNLVYGYCKLGSLKEAFQIVELMKQTNVLP), 309-343 (DLCTYNILINGLCNAGSMREGLELMDAMKSLKLQP), 344-378 (DVVTYNTLIDGCFELGLSLEARKLMEQMENDGVKA), 379-414 (NQVTHNISLKWLCKEEKREAVTRKVKELVDMHGFSP), 415-449 (DIVTYHTLIKAYLKVGDLSGALEMMREMGQKGIKM), 450-484 (NTITLNTILDALCKERKLDEAHNLLNSAHKRGFIV), 485-519 (DEVTYGTLIMGFFREEKVEKALEMWDEMKKVKITP), 520-554 (TVSTFNSLIGGLCHHGKTELAMEKFDELAESGLLP), 555-589 (DDSTFNSIILGYCKEGRVEKAFEFYNESIKHSFKP), 590-620 (DNYTCNILLNGLCKEGMTEKALNFFNTLIEE), 624-658 (DTVTYNTMISAFCKDKKLKEAYDLLSEMEEKGLEP), and 659-689 (DRFTYNSFISLLMEDGKLSETDELLKKFSGK).

This sequence belongs to the PPR family. P subfamily.

The sequence is that of Pentatricopeptide repeat-containing protein At2g16880 from Arabidopsis thaliana (Mouse-ear cress).